Reading from the N-terminus, the 576-residue chain is Arginine--tRNA ligase (576 aa).

A 'HIGH' region motif is present at residues 122-132 (PNVAKEMHVGH).

This sequence belongs to the class-I aminoacyl-tRNA synthetase family. As to quaternary structure, monomer.

It localises to the cytoplasm. It catalyses the reaction tRNA(Arg) + L-arginine + ATP = L-arginyl-tRNA(Arg) + AMP + diphosphate. The chain is Arginine--tRNA ligase from Sodalis glossinidius (strain morsitans).